A 109-amino-acid polypeptide reads, in one-letter code: Cytochrome c (109 aa).

4 residues coordinate heme c: Cys-25, Cys-28, His-29, and Met-88.

Belongs to the cytochrome c family. In terms of processing, binds 1 heme c group covalently per subunit.

The protein resides in the mitochondrion intermembrane space. Functionally, electron carrier protein. The oxidized form of the cytochrome c heme group can accept an electron from the heme group of the cytochrome c1 subunit of cytochrome reductase. Cytochrome c then transfers this electron to the cytochrome oxidase complex, the final protein carrier in the mitochondrial electron-transport chain. The chain is Cytochrome c from Tetrahymena pyriformis.